The chain runs to 159 residues: Large ribosomal subunit protein uL10 (159 aa).

The protein belongs to the universal ribosomal protein uL10 family. In terms of assembly, part of the ribosomal stalk of the 50S ribosomal subunit. The N-terminus interacts with L11 and the large rRNA to form the base of the stalk. The C-terminus forms an elongated spine to which L12 dimers bind in a sequential fashion forming a multimeric L10(L12)X complex.

Functionally, forms part of the ribosomal stalk, playing a central role in the interaction of the ribosome with GTP-bound translation factors. The chain is Large ribosomal subunit protein uL10 from Campylobacter jejuni (strain RM1221).